Here is a 471-residue protein sequence, read N- to C-terminus: Putative multidrug resistance protein MdtD (471 aa).

At 1 to 11 (MTDLPDSTRWQ) the chain is on the periplasmic side. A helical transmembrane segment spans residues 12-32 (LWIVAFGFFMQSLDTTIVNTA). The Cytoplasmic segment spans residues 33 to 48 (LPSMAQSLGESPLHMH). The chain crosses the membrane as a helical span at residues 49 to 69 (MVIVSYVLTVAVMLPASGWLA). The Periplasmic segment spans residues 70 to 76 (DKVGVRN). The helical transmembrane segment at 77-97 (IFFTAIVLFTLGSLFCALSGT) threads the bilayer. The Cytoplasmic portion of the chain corresponds to 98–101 (LNEL). The helical transmembrane segment at 102-124 (LLARALQGVGGAMMVPVGRLTVM) threads the bilayer. Residues 125–137 (KIVPREQYMAAMT) are Periplasmic-facing. A helical transmembrane segment spans residues 138–158 (FVTLPGQVGPLLGPALGGLLV). Over 159–164 (EYASWH) the chain is Cytoplasmic. A helical membrane pass occupies residues 165–185 (WIFLINIPVGIIGAIATLLLM). The Periplasmic segment spans residues 186–196 (PNYTMQTWRFD). The helical transmembrane segment at 197–217 (LSGFLLLAVGMAVLTLALDGS) threads the bilayer. Over 218–224 (KGTGLSP) the chain is Cytoplasmic. A helical transmembrane segment spans residues 225-245 (LAIAGLVAVGVVALVLYLLHA). Residues 246–262 (RNNNRALFSLKLFRTRT) lie on the Periplasmic side of the membrane. The chain crosses the membrane as a helical span at residues 263–283 (FSLGLAGSFAGRIGSGMLPFM). Residues 284-285 (TP) are Cytoplasmic-facing. Residues 286-306 (VFLQIGLGFSPFHAGLMMIPM) traverse the membrane as a helical segment. Topologically, residues 307–341 (VLGSMGMKRIVVQVVNRFGYRRVLVATTLGLSLVT) are periplasmic. The helical transmembrane segment at 342–362 (LLFMTTALLGWYYVLPFVLFL) threads the bilayer. The Cytoplasmic portion of the chain corresponds to 363 to 395 (QGMVNSTRFSSMNTLTLKDLPDNLASSGNSLLS). Residues 396-416 (MIMQLSMSIGVTIAGLLLGLF) traverse the membrane as a helical segment. Topologically, residues 417–430 (GSQHVSVDSGTTQT) are periplasmic. A helical membrane pass occupies residues 431–451 (VFMYTWLSMALIIALPAFIFA). Residues 452–471 (RVPNDTHQNVAISRRKRSAQ) are Cytoplasmic-facing.

The protein belongs to the major facilitator superfamily. TCR/Tet family.

Its subcellular location is the cell inner membrane. The polypeptide is Putative multidrug resistance protein MdtD (Shigella boydii serotype 4 (strain Sb227)).